The following is a 2581-amino-acid chain: Chromodomain-helicase-DNA-binding protein 8 (2581 aa).

Disordered regions lie at residues 22-114 (DDSF…QTST), 253-283 (VKGS…TQGE), 349-392 (QKIQ…SPGQ), 429-582 (ALSS…QVKR), and 596-615 (DEEE…PILP). Composition is skewed to polar residues over residues 42–51 (SLDSLDQMNQ) and 94–114 (DYTT…QTST). A compositionally biased stretch (low complexity) spans 255–267 (GSAPAGNPGATGP). Pro residues predominate over residues 355–370 (PQPPSSQPQPQQPPST). Position 432 is a phosphoserine (Ser-432). 2 stretches are compositionally biased toward basic and acidic residues: residues 445–462 (GMEE…EKAN) and 493–516 (RPEE…EEKP). A phosphoserine mark is found at Ser-553 and Ser-562. Basic residues predominate over residues 572-582 (QKRRSNRQVKR). A Glycyl lysine isopeptide (Lys-Gly) (interchain with G-Cter in SUMO) cross-link involves residue Lys-609. 2 consecutive Chromo domains span residues 642 to 709 (AIVD…AQMR) and 724 to 790 (VEVD…RVNR). In terms of domain architecture, Helicase ATP-binding spans 823-997 (LFNWYNRQNC…FSLLHFLEPS (175 aa)). An ATP-binding site is contributed by 836–843 (DEMGLGKT). The short motif at 948–951 (DEAH) is the DEAH box element. The region spanning 1137–1288 (LIDKLLPKLK…KAVLQSMSGR (152 aa)) is the Helicase C-terminal domain. A phosphoserine mark is found at Ser-1420 and Ser-1424. Residues 1692–1712 (EDPEYKPLQGPPKDQDDEGDP) are disordered. Residues 1789–2302 (IARREKQQRW…LVELEVECME (514 aa)) form an interaction with FAM124B region. Ser-1976 and Ser-1978 each carry phosphoserine. Positions 1991–2116 (SRTASPLPLR…TDQSRSKLYD (126 aa)) are disordered. Residue Thr-1993 is modified to Phosphothreonine. 2 positions are modified to phosphoserine: Ser-1995 and Ser-2008. Polar residues predominate over residues 2011-2021 (ETATQVPSLES). A Glycyl lysine isopeptide (Lys-Gly) (interchain with G-Cter in SUMO2) cross-link involves residue Lys-2025. Phosphoserine is present on Ser-2046. Thr-2051 carries the post-translational modification Phosphothreonine. Positions 2064-2073 (EDEDDSDSEL) are enriched in acidic residues. 2 positions are modified to phosphoserine: Ser-2069 and Ser-2071. A compositionally biased stretch (low complexity) spans 2076–2095 (SKLSPSSSSSSSSSSSSSST). Basic and acidic residues predominate over residues 2103–2116 (EEKLTDQSRSKLYD). Phosphoserine is present on residues Ser-2182, Ser-2200, and Ser-2202. The interval 2189 to 2229 (GILGPGNHLLDSPSLTPGEYGDSPVPTPRSSSAASMAEEEA) is disordered. Thr-2204 carries the post-translational modification Phosphothreonine. Position 2211 is a phosphoserine (Ser-2211). A Phosphothreonine modification is found at Thr-2215. Low complexity predominate over residues 2218 to 2229 (SSSAASMAEEEA). Residue Ser-2223 is modified to Phosphoserine. Lys-2256 participates in a covalent cross-link: Glycyl lysine isopeptide (Lys-Gly) (interchain with G-Cter in SUMO2). A disordered region spans residues 2481-2581 (PSSPHVDSST…NSDSSEDADD (101 aa)). Residues 2492–2510 (LHHHHHHPHPHHHHHHHPG) show a composition bias toward basic residues. Residue Ser-2519 is modified to Phosphoserine. Polar residues predominate over residues 2519–2528 (SPVTTASGTT). Residues 2536-2550 (PEEDDDEDEEDDDDL) show a composition bias toward acidic residues.

It belongs to the SNF2/RAD54 helicase family. CHD8 subfamily. In terms of assembly, interacts with p53/TP53, histone H1, CTNNB1, CTCF and PIAS3. Component of some MLL1/MLL complex, at least composed of the core components KMT2A/MLL1, ASH2L, HCFC1/HCF1, WDR5 and RBBP5, as well as the facultative components BACC1, CHD8, E2F6, HSP70, INO80C, KANSL1, LAS1L, MAX, MCRS1, MGA, KAT8/MOF, PELP1, PHF20, PRP31, RING2, RUVB1/TIP49A, RUVB2/TIP49B, SENP3, TAF1, TAF4, TAF6, TAF7, TAF9 and TEX10. Interacts with CHD7. Interacts with FAM124B. Interacts with TLK2. Interacts with HNRNPL in an RNA-dependent manner. Sumoylated.

The protein resides in the nucleus. It catalyses the reaction ATP + H2O = ADP + phosphate + H(+). ATP-dependent chromatin-remodeling factor, it slides nucleosomes along DNA; nucleosome sliding requires ATP. Acts as a transcription repressor by remodeling chromatin structure and recruiting histone H1 to target genes. Suppresses p53/TP53-mediated apoptosis by recruiting histone H1 and preventing p53/TP53 transactivation activity. Acts as a negative regulator of Wnt signaling pathway by regulating beta-catenin (CTNNB1) activity. Negatively regulates CTNNB1-targeted gene expression by being recruited specifically to the promoter regions of several CTNNB1 responsive genes. Involved in both enhancer blocking and epigenetic remodeling at chromatin boundary via its interaction with CTCF. Acts as a suppressor of STAT3 activity by suppressing the LIF-induced STAT3 transcriptional activity. Also acts as a transcription activator via its interaction with ZNF143 by participating in efficient U6 RNA polymerase III transcription. Regulates alternative splicing of a core group of genes involved in neuronal differentiation, cell cycle and DNA repair. Enables H3K36me3-coupled transcription elongation and co-transcriptional RNA processing likely via interaction with HNRNPL. In Homo sapiens (Human), this protein is Chromodomain-helicase-DNA-binding protein 8.